The primary structure comprises 272 residues: Acetylglutamate kinase (272 aa).

Substrate-binding positions include 41-42, Arg63, and Asn166; that span reads GG.

It belongs to the acetylglutamate kinase family. ArgB subfamily.

The protein resides in the cytoplasm. It carries out the reaction N-acetyl-L-glutamate + ATP = N-acetyl-L-glutamyl 5-phosphate + ADP. Its pathway is amino-acid biosynthesis; L-arginine biosynthesis; N(2)-acetyl-L-ornithine from L-glutamate: step 2/4. In terms of biological role, catalyzes the ATP-dependent phosphorylation of N-acetyl-L-glutamate. This Anaeromyxobacter dehalogenans (strain 2CP-1 / ATCC BAA-258) protein is Acetylglutamate kinase.